The following is a 726-amino-acid chain: Bromodomain-containing protein 3 (726 aa).

Residues 1-35 are disordered; that stretch reads MSTATTVAPAGIPATPGPVNPPPPEVSNPSKPGRK. Serine 2 is modified (N-acetylserine). The segment covering 15–26 has biased composition (pro residues); that stretch reads TPGPVNPPPPEV. Residues 34–140 enclose the Bromo 1 domain; that stretch reads RKTNQLQYMQ…KIFLQKVAQM (107 aa). The tract at residues 78 to 80 is acetylated histone H3 binding; sequence KNP. Disordered stretches follow at residues 149 to 169 and 237 to 305; these read PPAPKGKGRKPAAGAQSAGTQ and VKKK…AGKK. Low complexity predominate over residues 248-261; sequence TTTPTTSAITASRS. Residues serine 263 and serine 281 each carry the phosphoserine modification. Positions 306 to 415 constitute a Bromo 2 domain; sequence GKLSEHLRYC…DVFEMRFAKM (110 aa). A Glycyl lysine isopeptide (Lys-Gly) (interchain with G-Cter in SUMO2) cross-link involves residue lysine 414. Disordered regions lie at residues 421–462, 477–575, and 637–726; these read EAPA…RATR, LAAL…MSYD, and LQKK…SDSE. The stretch at 453–524 forms a coiled coil; it reads SDSEEERATR…AEEEKKAKVA (72 aa). Over residues 487-503 the composition is skewed to basic residues; it reads KPKKKKEKKEKEKKKKD. A compositionally biased stretch (basic and acidic residues) spans 504 to 521; sequence KEKEKEKHKVKAEEEKKA. The segment covering 523-540 has biased composition (low complexity); sequence VAPPAKQAQQKKAPAKKA. The region spanning 562–644 is the NET domain; that stretch reads DSEEEEEGLP…SCLQKKQRKP (83 aa). A Phosphoserine modification is found at serine 563. Residues 645–684 adopt a coiled-coil conformation; that stretch reads FSASGKKQAAKSKEELAQEKKKELEKRLQDVSGQLSSSKK. A compositionally biased stretch (basic and acidic residues) spans 655 to 673; it reads KSKEELAQEKKKELEKRLQ. Over residues 692 to 726 the composition is skewed to low complexity; the sequence is GSAPSGGPSRLSSSSSSESGSSSSSGSSSDSSDSE.

It belongs to the BET family. Interacts (via bromo domain 1) with GATA1 acetylated at 'Lys-312' and 'Lys-315'. Interacts (via bromo domain 1) with GATA2 acetylated on lysine residues. Interacts (via NET domain) with CHD4 (via KIKL motif). Interacts (via NET domain) with SMARCA4 (via KIKL motif). Interacts (via NET domain) with NSD3 (via KIKL motif). As to quaternary structure, (Microbial infection) Interacts with the Integrase protein of Moloney murine leukemia virus (MLV). In terms of tissue distribution, ubiquitous.

The protein resides in the nucleus. Its subcellular location is the chromosome. Its activity is regulated as follows. Inhibited by JQ1, a thieno-triazolo-1,4-diazepine derivative, which specifically inhibits members of the BET family (BRD2, BRD3 and BRD4). The first bromo domain is inhibited by GSK778 (iBET-BD1), which specifically inhibits the first bromo domain of members of the BET family (BRD2, BRD3 and BRD4). The second bromo domain is inhibited by ABBV-744, which specifically inhibits the second bromo domain of members of the BET family (BRD2, BRD3 and BRD4). The second bromo domain is inhibited by GSK046 (iBET-BD2), which specifically inhibits the second bromo domain of members of the BET family (BRD2, BRD3 and BRD4). Its function is as follows. Chromatin reader that recognizes and binds acetylated histones, thereby controlling gene expression and remodeling chromatin structures. Recruits transcription factors and coactivators to target gene sites, and activates RNA polymerase II machinery for transcriptional elongation. In vitro, binds acetylated lysine residues on the N-terminus of histone H2A, H2B, H3 and H4. Involved in endoderm differentiation via its association with long non-coding RNA (lncRNA) DIGIT: BRD3 undergoes liquid-liquid phase separation upon binding to lncRNA DIGIT, promoting binding to histone H3 acetylated at 'Lys-18' (H3K18ac) to induce endoderm gene expression. Also binds non-histones acetylated proteins, such as GATA1 and GATA2: regulates transcription by promoting the binding of the transcription factor GATA1 to its targets. This is Bromodomain-containing protein 3 from Homo sapiens (Human).